The following is a 351-amino-acid chain: Selenide, water dikinase (351 aa).

C20 is an active-site residue. ATP contacts are provided by residues K23 and 51-53 (TKD). D54 is a binding site for Mg(2+). ATP contacts are provided by residues D71, D94, and 142-144 (GHS). D94 is a Mg(2+) binding site. Position 230 (D230) interacts with Mg(2+).

This sequence belongs to the selenophosphate synthase 1 family. Class I subfamily. In terms of assembly, homodimer. Mg(2+) serves as cofactor.

The enzyme catalyses hydrogenselenide + ATP + H2O = selenophosphate + AMP + phosphate + 2 H(+). Synthesizes selenophosphate from selenide and ATP. The polypeptide is Selenide, water dikinase (Pasteurella multocida (strain Pm70)).